A 334-amino-acid chain; its full sequence is Chemotactic signal transduction system substrate-binding protein CosB (334 aa).

An N-terminal signal peptide occupies residues 1-29; the sequence is MMDTPEHASTSSRRQLLGMLAAGGTTAVA.

This sequence belongs to the OsmX family.

Its subcellular location is the cell membrane. Functionally, mediates chemotaxis towards compatible osmolytes. May function as a receptor that binds the osmolytes and transduces a signal to CosT. Has probably no additional role in transport. The protein is Chemotactic signal transduction system substrate-binding protein CosB (cosB) of Halobacterium salinarum (strain ATCC 29341 / DSM 671 / R1).